The following is a 64-amino-acid chain: Small ribosomal subunit protein bS21 (64 aa).

It belongs to the bacterial ribosomal protein bS21 family.

The protein is Small ribosomal subunit protein bS21 of Amoebophilus asiaticus (strain 5a2).